The primary structure comprises 147 residues: Hemoglobin subunit beta (147 aa).

Valine 2 carries the post-translational modification N-acetylvaline. The Globin domain occupies histidine 3 to histidine 147. The residue at position 45 (serine 45) is a Phosphoserine. An N6-acetyllysine modification is found at lysine 60. Residue histidine 64 coordinates heme b. N6-acetyllysine is present on lysine 83. Histidine 93 provides a ligand contact to heme b. Cysteine 94 is subject to S-nitrosocysteine. Lysine 145 is modified (N6-acetyllysine).

It belongs to the globin family. As to quaternary structure, heterotetramer of two alpha chains and two beta chains. In terms of tissue distribution, red blood cells.

In terms of biological role, involved in oxygen transport from the lung to the various peripheral tissues. In Bradypus tridactylus (Pale-throated three-toed sloth), this protein is Hemoglobin subunit beta (HBB).